Here is a 212-residue protein sequence, read N- to C-terminus: Pyridoxine/pyridoxamine 5'-phosphate oxidase (212 aa).

Residues 8–11 (RREY) and Lys66 each bind substrate. FMN-binding positions include 61 to 66 (RIVLLK), 76 to 77 (FT), Arg82, Lys83, and Gln105. The substrate site is built by Tyr123, Arg127, and Ser131. FMN is bound by residues 140–141 (QS) and Trp185. Residue 191–193 (RLH) participates in substrate binding. An FMN-binding site is contributed by Arg195.

The protein belongs to the pyridoxamine 5'-phosphate oxidase family. As to quaternary structure, homodimer. The cofactor is FMN.

The catalysed reaction is pyridoxamine 5'-phosphate + O2 + H2O = pyridoxal 5'-phosphate + H2O2 + NH4(+). It catalyses the reaction pyridoxine 5'-phosphate + O2 = pyridoxal 5'-phosphate + H2O2. It functions in the pathway cofactor metabolism; pyridoxal 5'-phosphate salvage; pyridoxal 5'-phosphate from pyridoxamine 5'-phosphate: step 1/1. It participates in cofactor metabolism; pyridoxal 5'-phosphate salvage; pyridoxal 5'-phosphate from pyridoxine 5'-phosphate: step 1/1. Functionally, catalyzes the oxidation of either pyridoxine 5'-phosphate (PNP) or pyridoxamine 5'-phosphate (PMP) into pyridoxal 5'-phosphate (PLP). This chain is Pyridoxine/pyridoxamine 5'-phosphate oxidase, found in Shewanella baltica (strain OS155 / ATCC BAA-1091).